We begin with the raw amino-acid sequence, 301 residues long: Ribosomal protein L11 methyltransferase (301 aa).

Thr146, Gly167, Asp189, and Asn237 together coordinate S-adenosyl-L-methionine.

The protein belongs to the methyltransferase superfamily. PrmA family.

The protein localises to the cytoplasm. The catalysed reaction is L-lysyl-[protein] + 3 S-adenosyl-L-methionine = N(6),N(6),N(6)-trimethyl-L-lysyl-[protein] + 3 S-adenosyl-L-homocysteine + 3 H(+). Its function is as follows. Methylates ribosomal protein L11. The polypeptide is Ribosomal protein L11 methyltransferase (Prochlorococcus marinus (strain MIT 9303)).